A 207-amino-acid chain; its full sequence is 2,3-bisphosphoglycerate-dependent phosphoglycerate mutase (207 aa).

Substrate is bound by residues 10 to 17 (RHGQSEWN), 23 to 24 (TG), arginine 62, 89 to 92 (ERDY), lysine 100, 116 to 117 (RR), and 160 to 161 (GN). Histidine 11 serves as the catalytic Tele-phosphohistidine intermediate. Glutamate 89 (proton donor/acceptor) is an active-site residue.

Belongs to the phosphoglycerate mutase family. BPG-dependent PGAM subfamily. Homodimer.

It catalyses the reaction (2R)-2-phosphoglycerate = (2R)-3-phosphoglycerate. Its pathway is carbohydrate degradation; glycolysis; pyruvate from D-glyceraldehyde 3-phosphate: step 3/5. Functionally, catalyzes the interconversion of 2-phosphoglycerate and 3-phosphoglycerate. The protein is 2,3-bisphosphoglycerate-dependent phosphoglycerate mutase of Bradyrhizobium sp. (strain BTAi1 / ATCC BAA-1182).